Here is a 359-residue protein sequence, read N- to C-terminus: uncharacterized protein (359 aa).

Positions 1-17 are cleaved as a signal peptide; that stretch reads MLGRSLTSVLIVPTGIG. Residue cysteine 18 is the site of N-palmitoyl cysteine attachment. Cysteine 18 carries the S-diacylglycerol cysteine lipid modification.

The protein resides in the cell membrane. This is an uncharacterized protein from Synechococcus sp. (strain ATCC 27144 / PCC 6301 / SAUG 1402/1) (Anacystis nidulans).